The chain runs to 588 residues: Adenine deaminase (588 aa).

The protein belongs to the metallo-dependent hydrolases superfamily. Adenine deaminase family. In terms of assembly, homodimer. Mn(2+) serves as cofactor.

The catalysed reaction is adenine + H2O + H(+) = hypoxanthine + NH4(+). This chain is Adenine deaminase, found in Shigella sonnei (strain Ss046).